A 222-amino-acid chain; its full sequence is Beta-amylase (222 aa).

Residue threonine 36 coordinates substrate. The Proton acceptor role is filled by glutamate 74. Substrate is bound by residues asparagine 75–alanine 76 and arginine 114.

This sequence belongs to the glycosyl hydrolase 14 family.

The enzyme catalyses Hydrolysis of (1-&gt;4)-alpha-D-glucosidic linkages in polysaccharides so as to remove successive maltose units from the non-reducing ends of the chains.. This is Beta-amylase (BMY1) from Secale cereale (Rye).